The sequence spans 361 residues: RLA class I histocompatibility antigen, alpha chain 19-1 (361 aa).

A signal peptide spans 1–24; it reads MGSIPPRTLLLLLAGALTLKDTQA. The segment at 25–114 is alpha-1; it reads GSHSMRYFYT…ALRYYNQSAA (90 aa). Residues 25–308 are Extracellular-facing; that stretch reads GSHSMRYFYT…EPPAQPTALI (284 aa). The N-linked (GlcNAc...) asparagine glycan is linked to asparagine 110. Positions 115–206 are alpha-2; it reads GSHTFQTMFG…EMGKETLQRA (92 aa). Intrachain disulfides connect cysteine 125/cysteine 188 and cysteine 227/cysteine 283. The interval 207–298 is alpha-3; the sequence is DPPKAHVTHH…GLPEPLTLTW (92 aa). Positions 209-297 constitute an Ig-like C1-type domain; that stretch reads PKAHVTHHPA…EGLPEPLTLT (89 aa). The connecting peptide stretch occupies residues 299-308; it reads EPPAQPTALI. Residues 309–329 traverse the membrane as a helical segment; sequence VGIVAGVLGVLLILGAVVAVV. Over 330-361 the chain is Cytoplasmic; sequence RRKKHSSDGKGGRYTPAAGGHRDQGSDDSLMP. The segment at 335–361 is disordered; the sequence is SSDGKGGRYTPAAGGHRDQGSDDSLMP. Phosphoserine is present on residues serine 355 and serine 358.

Belongs to the MHC class I family. As to quaternary structure, heterodimer of an alpha chain and a beta chain (beta-2-microglobulin).

The protein localises to the membrane. Functionally, involved in the presentation of foreign antigens to the immune system. The chain is RLA class I histocompatibility antigen, alpha chain 19-1 from Oryctolagus cuniculus (Rabbit).